The primary structure comprises 535 residues: Thermosome subunit gamma (535 aa).

It belongs to the TCP-1 chaperonin family. As to quaternary structure, forms a heterooligomeric complex of two stacked nine-membered rings; one of alpha and the other of beta subunits.

The protein resides in the cytoplasm. The catalysed reaction is ATP + H2O = ADP + phosphate + H(+). Its function is as follows. Molecular chaperone; binds unfolded polypeptides in vitro, and has a weak ATPase activity. This Saccharolobus shibatae (strain ATCC 51178 / DSM 5389 / JCM 8931 / NBRC 15437 / B12) (Sulfolobus shibatae) protein is Thermosome subunit gamma (thsC).